Reading from the N-terminus, the 281-residue chain is Cytosolic Fe-S cluster assembly factor CFD1 (281 aa).

Residue 24-31 (GKGGVGKS) coordinates ATP. Cys-201 and Cys-204 together coordinate [4Fe-4S] cluster.

Belongs to the Mrp/NBP35 ATP-binding proteins family. NUBP2/CFD1 subfamily. Heterotetramer of 2 NBP35 and 2 CFD1 chains. [4Fe-4S] cluster is required as a cofactor.

It localises to the cytoplasm. In terms of biological role, component of the cytosolic iron-sulfur (Fe/S) protein assembly (CIA) machinery. Required for maturation of extramitochondrial Fe-S proteins. The NBP35-CFD1 heterotetramer forms a Fe-S scaffold complex, mediating the de novo assembly of an Fe-S cluster and its transfer to target apoproteins. Required for biogenesis and export of both ribosomal subunits, which may reflect a role in assembly of the Fe/S clusters in RLI1, a protein which performs rRNA processing and ribosome export. In Eremothecium gossypii (strain ATCC 10895 / CBS 109.51 / FGSC 9923 / NRRL Y-1056) (Yeast), this protein is Cytosolic Fe-S cluster assembly factor CFD1.